We begin with the raw amino-acid sequence, 421 residues long: Serine hydroxymethyltransferase (421 aa).

(6S)-5,6,7,8-tetrahydrofolate contacts are provided by residues L121 and 125–127 (GHL). N6-(pyridoxal phosphate)lysine is present on K229.

The protein belongs to the SHMT family. Homodimer. Requires pyridoxal 5'-phosphate as cofactor.

The protein resides in the cytoplasm. It catalyses the reaction (6R)-5,10-methylene-5,6,7,8-tetrahydrofolate + glycine + H2O = (6S)-5,6,7,8-tetrahydrofolate + L-serine. It participates in one-carbon metabolism; tetrahydrofolate interconversion. It functions in the pathway amino-acid biosynthesis; glycine biosynthesis; glycine from L-serine: step 1/1. Its function is as follows. Catalyzes the reversible interconversion of serine and glycine with tetrahydrofolate (THF) serving as the one-carbon carrier. This reaction serves as the major source of one-carbon groups required for the biosynthesis of purines, thymidylate, methionine, and other important biomolecules. Also exhibits THF-independent aldolase activity toward beta-hydroxyamino acids, producing glycine and aldehydes, via a retro-aldol mechanism. The polypeptide is Serine hydroxymethyltransferase (Actinobacillus pleuropneumoniae serotype 7 (strain AP76)).